The primary structure comprises 337 residues: Protein BIG GRAIN 1-like (337 aa).

Disordered regions lie at residues 1 to 32 (MRDMEMRWAAPAPATRGRGRARRRAPDQPSFS), 120 to 163 (SAAG…RPAS), and 179 to 233 (KRPS…ARPS). Positions 137 to 146 (HEQPDVEKTA) are enriched in basic and acidic residues. Composition is skewed to low complexity over residues 150–163 (PGSASARACRRPAS), 195–209 (PACSTAPPSSSSSYA), and 219–230 (RTPPTTTTTARA).

It belongs to the BIG GRAIN 1 (BG1) plant protein family.

The protein localises to the cell membrane. Its function is as follows. Involved in auxin transport. Regulator of the auxin signaling pathway. This chain is Protein BIG GRAIN 1-like, found in Oryza sativa subsp. indica (Rice).